Consider the following 34-residue polypeptide: Conotoxin Cl6d (34 aa).

Cystine bridges form between Cys4–Cys19, Cys12–Cys29, and Cys18–Cys33. A 4-hydroxyproline mark is found at Pro14 and Pro21.

Expressed by the venom duct.

The protein localises to the secreted. This chain is Conotoxin Cl6d, found in Californiconus californicus (California cone).